Consider the following 79-residue polypeptide: Sec-independent protein translocase protein TatA (79 aa).

A helical transmembrane segment spans residues 1-21 (MGGISIWQLLIILVIVVLLFG). The interval 45-79 (EEEKDADFEQKKQVEEKSAAEPVSTETQSDVKEKS) is disordered. The span at 51-63 (DFEQKKQVEEKSA) shows a compositional bias: basic and acidic residues.

Belongs to the TatA/E family. The Tat system comprises two distinct complexes: a TatABC complex, containing multiple copies of TatA, TatB and TatC subunits, and a separate TatA complex, containing only TatA subunits. Substrates initially bind to the TatABC complex, which probably triggers association of the separate TatA complex to form the active translocon.

Its subcellular location is the cell inner membrane. Part of the twin-arginine translocation (Tat) system that transports large folded proteins containing a characteristic twin-arginine motif in their signal peptide across membranes. TatA could form the protein-conducting channel of the Tat system. This is Sec-independent protein translocase protein TatA from Alteromonas mediterranea (strain DSM 17117 / CIP 110805 / LMG 28347 / Deep ecotype).